Here is a 559-residue protein sequence, read N- to C-terminus: Tissue-type plasminogen activator (559 aa).

A signal peptide spans 1–17 (MKGELLCVLLLCGVAFT). A propeptide spanning residues 18–29 (LPDQGIHRRFRR) is cleaved from the precursor. The propeptide at 30-32 (GAR) is removed by plasmin. One can recognise a Fibronectin type-I domain in the interval 36 to 78 (ATCRDEQTQTTYQQHQSWLRPMLRGNRVEYCRCNSGLAQCHSV). 17 cysteine pairs are disulfide-bonded: C38–C68, C66–C75, C83–C94, C88–C105, C107–C116, C124–C205, C145–C187, C176–C200, C213–C294, C234–C276, C265–C289, C297–C428, C340–C356, C348–C417, C442–C516, C474–C490, and C506–C534. The important for binding to annexin A2 stretch occupies residues 39–49 (RDEQTQTTYQQ). Residues 79–117 (PVRSCSEPRCFNGGTCQQALYFSDFVCQCPDGFVGKRCD) form the EGF-like domain. Kringle domains lie at 124–205 (CFEG…TPAC) and 213–294 (CYVG…MSPC). The N-linked (GlcNAc...) asparagine glycan is linked to N149. In terms of domain architecture, Peptidase S1 spans 309-558 (IKGGLFTDIT…YLNWIQDNMK (250 aa)). Active-site charge relay system residues include H355 and D404. The N-linked (GlcNAc...) asparagine glycan is linked to N481. S510 acts as the Charge relay system in catalysis.

The protein belongs to the peptidase S1 family. As to quaternary structure, heterodimer of chain A and chain B held by a disulfide bond. Binds to fibrin with high affinity. This interaction leads to an increase in the catalytic efficiency of the enzyme due to an increase in affinity for plasminogen. Similarly, binding to heparin increases the activation of plasminogen. Binds to annexin A2, cytokeratin-8, fibronectin and laminin. Binds to mannose receptor and the low-density lipoprotein receptor-related protein (LRP1); these proteins are involved in TPA clearance. Binds LRP1B; binding is followed by internalization and degradation. Forms heterodimer with SERPINA5. Interacts with SERPINE1. In complex with SERPINE1, interacts with SORL1. In terms of processing, the single chain, almost fully active enzyme, can be further processed into a two-chain fully active form by a cleavage after Arg-308 catalyzed by plasmin, tissue kallikrein or factor Xa.

The protein resides in the secreted. It localises to the extracellular space. The enzyme catalyses Specific cleavage of Arg-|-Val bond in plasminogen to form plasmin.. Its activity is regulated as follows. Inhibited by SERPINA5. Inhibited by SERPINE1. Converts the abundant, but inactive, zymogen plasminogen to plasmin by hydrolyzing a single Arg-Val bond in plasminogen. By controlling plasmin-mediated proteolysis, it plays an important role in tissue remodeling and degradation, in cell migration and many other physiopathological events. During oocyte activation, plays a role in cortical granule reaction in the zona reaction, which contributes to the block to polyspermy. In Rattus norvegicus (Rat), this protein is Tissue-type plasminogen activator (Plat).